Here is a 475-residue protein sequence, read N- to C-terminus: Cysteine--tRNA ligase (475 aa).

Cysteine 28 lines the Zn(2+) pocket. A 'HIGH' region motif is present at residues proline 30–histidine 40. The Zn(2+) site is built by cysteine 208, histidine 233, and glutamate 237. Positions lysine 265–serine 269 match the 'KMSKS' region motif. Residue lysine 268 participates in ATP binding.

This sequence belongs to the class-I aminoacyl-tRNA synthetase family. Zn(2+) is required as a cofactor.

It localises to the cytoplasm. It carries out the reaction tRNA(Cys) + L-cysteine + ATP = L-cysteinyl-tRNA(Cys) + AMP + diphosphate. The polypeptide is Cysteine--tRNA ligase (Methanococcus vannielii (strain ATCC 35089 / DSM 1224 / JCM 13029 / OCM 148 / SB)).